The sequence spans 157 residues: Small ribosomal subunit protein uS7 (157 aa).

It belongs to the universal ribosomal protein uS7 family. In terms of assembly, part of the 30S ribosomal subunit. Contacts proteins S9 and S11.

One of the primary rRNA binding proteins, it binds directly to 16S rRNA where it nucleates assembly of the head domain of the 30S subunit. Is located at the subunit interface close to the decoding center, probably blocks exit of the E-site tRNA. The protein is Small ribosomal subunit protein uS7 of Francisella tularensis subsp. holarctica (strain OSU18).